A 107-amino-acid chain; its full sequence is U1-lycotoxin-Ls1q (107 aa).

The signal sequence occupies residues 1 to 20 (MMKVLVVVALLVTLISYSSS). Positions 21 to 41 (EGIDDLEADELLSLMANEQTR) are excised as a propeptide. 4 disulfide bridges follow: Cys44–Cys59, Cys51–Cys68, Cys58–Cys86, and Cys70–Cys84.

This sequence belongs to the neurotoxin 19 (CSTX) family. 04 (U1-Lctx) subfamily. Expressed by the venom gland.

Its subcellular location is the secreted. This chain is U1-lycotoxin-Ls1q, found in Lycosa singoriensis (Wolf spider).